The following is a 137-amino-acid chain: Fluoride-specific ion channel FluC 4 (137 aa).

Transmembrane regions (helical) follow at residues 20–40, 43–63, 83–103, and 110–130; these read AAIG…ILGA, LWGT…FATL, GLCG…LLVL, and ALAY…LGLI. Glycine 86 and threonine 89 together coordinate Na(+).

This sequence belongs to the fluoride channel Fluc/FEX (TC 1.A.43) family.

It localises to the cell inner membrane. The enzyme catalyses fluoride(in) = fluoride(out). Na(+) is not transported, but it plays an essential structural role and its presence is essential for fluoride channel function. In terms of biological role, fluoride-specific ion channel. Important for reducing fluoride concentration in the cell, thus reducing its toxicity. The protein is Fluoride-specific ion channel FluC 4 of Brucella suis biovar 1 (strain 1330).